A 493-amino-acid chain; its full sequence is Extracellular tyrosine-protein kinase PKDCC (493 aa).

The first 32 residues, 1–32 (MRRRRAAVAAGFCASFLLGSVLNVLFAPGSEP), serve as a signal peptide directing secretion. The disordered stretch occupies residues 28-128 (PGSEPPRPGQ…PGPGSPGPGP (101 aa)). Pro residues predominate over residues 30-46 (SEPPRPGQSPEPSPAPG). Residues 52 to 69 (GRGELARQIRARYEEVQR) are compositionally biased toward basic and acidic residues. Composition is skewed to pro residues over residues 95-105 (PGLPRPRPPWA) and 114-127 (GWPP…PGPG). Asn-137 carries N-linked (GlcNAc...) asparagine glycosylation. The Protein kinase domain maps to 138–493 (VSGAQYMGSG…NKTTYVKASG (356 aa)). ATP-binding positions include 144–152 (MGSGYTKAV) and Lys-166. Tyr-148 carries the post-translational modification Phosphotyrosine. Position 177 is a phosphoserine (Ser-177). Asp-278 functions as the Proton acceptor in the catalytic mechanism. N-linked (GlcNAc...) asparagine glycosylation is found at Asn-320, Asn-369, Asn-400, Asn-460, and Asn-484.

It belongs to the protein kinase superfamily. N-glycosylated. In terms of processing, phosphorylated on tyrosines; probably via autophosphorylation. As to expression, highly expressed in platelets.

The protein resides in the secreted. Its subcellular location is the golgi apparatus. It carries out the reaction L-tyrosyl-[protein] + ATP = O-phospho-L-tyrosyl-[protein] + ADP + H(+). Its function is as follows. Secreted tyrosine-protein kinase that mediates phosphorylation of extracellular proteins and endogenous proteins in the secretory pathway, which is essential for patterning at organogenesis stages. Mediates phosphorylation of MMP1, MMP13, MMP14, MMP19 and ERP29. Probably plays a role in platelets: rapidly and quantitatively secreted from platelets in response to stimulation of platelet degranulation. May also have serine/threonine protein kinase activity. Required for longitudinal bone growth through regulation of chondrocyte differentiation. May be indirectly involved in protein transport from the Golgi apparatus to the plasma membrane. In Homo sapiens (Human), this protein is Extracellular tyrosine-protein kinase PKDCC.